The sequence spans 78 residues: Large ribosomal subunit protein bL28 (78 aa).

Belongs to the bacterial ribosomal protein bL28 family.

The chain is Large ribosomal subunit protein bL28 (rpmB) from Xylella fastidiosa (strain 9a5c).